A 205-amino-acid chain; its full sequence is Octanoyltransferase (205 aa).

Positions 30 to 205 (NSADELVWLL…ILKKEFYKIF (176 aa)) constitute a BPL/LPL catalytic domain. Residues 68–75 (RGGKHTYH), 140–142 (AFG), and 153–155 (GIA) each bind substrate. The Acyl-thioester intermediate role is filled by Cys-171.

Belongs to the LipB family.

Its subcellular location is the cytoplasm. It carries out the reaction octanoyl-[ACP] + L-lysyl-[protein] = N(6)-octanoyl-L-lysyl-[protein] + holo-[ACP] + H(+). Its pathway is protein modification; protein lipoylation via endogenous pathway; protein N(6)-(lipoyl)lysine from octanoyl-[acyl-carrier-protein]: step 1/2. In terms of biological role, catalyzes the transfer of endogenously produced octanoic acid from octanoyl-acyl-carrier-protein onto the lipoyl domains of lipoate-dependent enzymes. Lipoyl-ACP can also act as a substrate although octanoyl-ACP is likely to be the physiological substrate. This is Octanoyltransferase from Wolbachia pipientis wMel.